Here is a 153-residue protein sequence, read N- to C-terminus: Holo-[acyl-carrier-protein] synthase (153 aa).

The Mg(2+) site is built by aspartate 24 and glutamate 78.

This sequence belongs to the P-Pant transferase superfamily. AcpS family. The cofactor is Mg(2+).

It localises to the cytoplasm. It carries out the reaction apo-[ACP] + CoA = holo-[ACP] + adenosine 3',5'-bisphosphate + H(+). Functionally, transfers the 4'-phosphopantetheine moiety from coenzyme A to a Ser of acyl-carrier-protein. This is Holo-[acyl-carrier-protein] synthase from Bordetella parapertussis (strain 12822 / ATCC BAA-587 / NCTC 13253).